Consider the following 512-residue polypeptide: ATP synthase subunit alpha (512 aa).

169–176 provides a ligand contact to ATP; that stretch reads GDRQTGKT.

The protein belongs to the ATPase alpha/beta chains family. F-type ATPases have 2 components, CF(1) - the catalytic core - and CF(0) - the membrane proton channel. CF(1) has five subunits: alpha(3), beta(3), gamma(1), delta(1), epsilon(1). CF(0) has four main subunits: a(1), b(1), b'(1) and c(9-12).

The protein resides in the cell inner membrane. The catalysed reaction is ATP + H2O + 4 H(+)(in) = ADP + phosphate + 5 H(+)(out). Produces ATP from ADP in the presence of a proton gradient across the membrane. The alpha chain is a regulatory subunit. The protein is ATP synthase subunit alpha of Cereibacter sphaeroides (strain ATCC 17025 / ATH 2.4.3) (Rhodobacter sphaeroides).